The following is a 785-amino-acid chain: Conidiophore development regulator abaA (785 aa).

A disordered region spans residues 1 to 22; the sequence is MAEWQTECMLPPTQPGFEGVGP. Residues 130–204 constitute a DNA-binding region (TEA); sequence GKDGEPVWSD…QVLDSFLKGD (75 aa). Residues 213-232 are disordered; sequence EQPADRSNGQPPSAGPRWRN.

This sequence belongs to the TEC1 family.

Its subcellular location is the nucleus. BrlA, abaA and wetA are pivotal regulators of conidiophore development and conidium maturation. They act individually and together to regulate their own expression and that of numerous other sporulation-specific genes. Binds to the sequence 5'-CATTCY-3', where Y is a pyrimidine, making both major- and minor-groove contacts. Controls expression of wetA. The sequence is that of Conidiophore development regulator abaA from Aspergillus oryzae (strain ATCC 42149 / RIB 40) (Yellow koji mold).